The primary structure comprises 105 residues: Large ribosomal subunit protein uL24 (105 aa).

It belongs to the universal ribosomal protein uL24 family. In terms of assembly, part of the 50S ribosomal subunit.

In terms of biological role, one of two assembly initiator proteins, it binds directly to the 5'-end of the 23S rRNA, where it nucleates assembly of the 50S subunit. One of the proteins that surrounds the polypeptide exit tunnel on the outside of the subunit. In Anaplasma marginale (strain St. Maries), this protein is Large ribosomal subunit protein uL24.